We begin with the raw amino-acid sequence, 481 residues long: Small ribosomal subunit protein bS1 (481 aa).

S1 motif domains follow at residues 36–105 (GDIV…LSKK), 123–188 (DEAV…LSRR), 209–277 (GAIR…LSLK), and 294–363 (GQIV…LSLK). The segment at 437–465 (ATEEAGHGSSEQPPASSTPSAKATGGSLA) is disordered. The segment covering 445–457 (SSEQPPASSTPSA) has biased composition (polar residues).

It belongs to the bacterial ribosomal protein bS1 family.

In terms of biological role, binds mRNA; thus facilitating recognition of the initiation point. It is needed to translate mRNA with a short Shine-Dalgarno (SD) purine-rich sequence. This chain is Small ribosomal subunit protein bS1 (rpsA), found in Mycobacterium leprae (strain TN).